The primary structure comprises 221 residues: 7-cyano-7-deazaguanine synthase (221 aa).

12–22 (FSGGQDSTTCL) is an ATP binding site. Zn(2+) contacts are provided by Cys190, Cys199, Cys202, and Cys205.

The protein belongs to the QueC family. Homodimer. Zn(2+) is required as a cofactor.

It carries out the reaction 7-carboxy-7-deazaguanine + NH4(+) + ATP = 7-cyano-7-deazaguanine + ADP + phosphate + H2O + H(+). It participates in purine metabolism; 7-cyano-7-deazaguanine biosynthesis. Catalyzes the ATP-dependent conversion of 7-carboxy-7-deazaguanine (CDG) to 7-cyano-7-deazaguanine (preQ(0)). This Clostridium novyi (strain NT) protein is 7-cyano-7-deazaguanine synthase.